The chain runs to 351 residues: Holliday junction branch migration complex subunit RuvB (351 aa).

Acidic residues predominate over residues 1 to 12 (MGRFEDDAEVED). A disordered region spans residues 1 to 23 (MGRFEDDAEVEDREVSPALTVGE). The segment at 1–191 (MGRFEDDAEV…FGFTAHMDFY (191 aa)) is large ATPase domain (RuvB-L). Residues Leu30, Arg31, Gly72, Lys75, Thr76, Ser77, 138–140 (EDF), Arg181, Tyr191, and Arg228 contribute to the ATP site. Thr76 serves as a coordination point for Mg(2+). Positions 192–262 (EPVELERVLA…IAKSALEVYD (71 aa)) are small ATPAse domain (RuvB-S). Residues 265-351 (ELGLDRLDRA…TGIGQAGLFD (87 aa)) form a head domain (RuvB-H) region. DNA is bound by residues Arg320 and Arg325.

The protein belongs to the RuvB family. Homohexamer. Forms an RuvA(8)-RuvB(12)-Holliday junction (HJ) complex. HJ DNA is sandwiched between 2 RuvA tetramers; dsDNA enters through RuvA and exits via RuvB. An RuvB hexamer assembles on each DNA strand where it exits the tetramer. Each RuvB hexamer is contacted by two RuvA subunits (via domain III) on 2 adjacent RuvB subunits; this complex drives branch migration. In the full resolvosome a probable DNA-RuvA(4)-RuvB(12)-RuvC(2) complex forms which resolves the HJ.

Its subcellular location is the cytoplasm. It carries out the reaction ATP + H2O = ADP + phosphate + H(+). In terms of biological role, the RuvA-RuvB-RuvC complex processes Holliday junction (HJ) DNA during genetic recombination and DNA repair, while the RuvA-RuvB complex plays an important role in the rescue of blocked DNA replication forks via replication fork reversal (RFR). RuvA specifically binds to HJ cruciform DNA, conferring on it an open structure. The RuvB hexamer acts as an ATP-dependent pump, pulling dsDNA into and through the RuvAB complex. RuvB forms 2 homohexamers on either side of HJ DNA bound by 1 or 2 RuvA tetramers; 4 subunits per hexamer contact DNA at a time. Coordinated motions by a converter formed by DNA-disengaged RuvB subunits stimulates ATP hydrolysis and nucleotide exchange. Immobilization of the converter enables RuvB to convert the ATP-contained energy into a lever motion, pulling 2 nucleotides of DNA out of the RuvA tetramer per ATP hydrolyzed, thus driving DNA branch migration. The RuvB motors rotate together with the DNA substrate, which together with the progressing nucleotide cycle form the mechanistic basis for DNA recombination by continuous HJ branch migration. Branch migration allows RuvC to scan DNA until it finds its consensus sequence, where it cleaves and resolves cruciform DNA. The chain is Holliday junction branch migration complex subunit RuvB from Mycolicibacterium smegmatis (strain ATCC 700084 / mc(2)155) (Mycobacterium smegmatis).